A 441-amino-acid polypeptide reads, in one-letter code: Amino-acid acetyltransferase (441 aa).

Residues 295-434 form the N-acetyltransferase domain; that stretch reads EQVRRATIND…QELYNYQRRS (140 aa).

This sequence belongs to the acetyltransferase family. ArgA subfamily. In terms of assembly, homohexamer.

The protein resides in the cytoplasm. It carries out the reaction L-glutamate + acetyl-CoA = N-acetyl-L-glutamate + CoA + H(+). Its pathway is amino-acid biosynthesis; L-arginine biosynthesis; N(2)-acetyl-L-ornithine from L-glutamate: step 1/4. This chain is Amino-acid acetyltransferase, found in Yersinia pseudotuberculosis serotype O:1b (strain IP 31758).